The chain runs to 605 residues: Putative zinc finger CCCH domain-containing protein 57 (605 aa).

Disordered stretches follow at residues 198 to 218, 238 to 261, and 375 to 403; these read RHTG…GREV, LLQD…DGEV, and QASH…YQQP. Composition is skewed to basic and acidic residues over residues 201 to 218 and 238 to 250; these read GHES…GREV and LLQD…RADA. Positions 389–403 are enriched in low complexity; it reads FPFQQQPQHDGYQQP. C3H1-type zinc fingers lie at residues 519 to 547 and 557 to 585; these read EPKT…HSQD and KYRT…QHRL.

The protein is Putative zinc finger CCCH domain-containing protein 57 of Oryza sativa subsp. japonica (Rice).